The following is a 163-amino-acid chain: Ribonuclease P protein subunit p25-like protein (163 aa).

Disordered stretches follow at residues 1 to 24 (MEQYRRAGSVELPASSPMPQLPPD) and 126 to 163 (LDPSECGYQPPGAPPGLGSIPSPSCGPRPRRRARDTRS). The span at 153–163 (RPRRRARDTRS) shows a compositional bias: basic residues.

It belongs to the histone-like Alba family.

Its subcellular location is the nucleus. May be a component of ribonuclease P or MRP. In Mus musculus (Mouse), this protein is Ribonuclease P protein subunit p25-like protein (Rpp25l).